Reading from the N-terminus, the 393-residue chain is Proteasome-activating nucleotidase (393 aa).

The stretch at 14–53 (SDEVQLVRLLEEKIKSLQIEIENLRKELNYYKAEMEKMLS) forms a coiled coil. ATP is bound by residues 178–183 (GTGKTM) and Y317. A docks into pockets in the proteasome alpha-ring to cause gate opening region spans residues 391 to 393 (KYS).

Belongs to the AAA ATPase family. Homohexamer. The hexameric complex has a two-ring architecture resembling a top hat that caps the 20S proteasome core at one or both ends. Upon ATP-binding, the C-terminus of PAN interacts with the alpha-rings of the proteasome core by binding to the intersubunit pockets.

Its subcellular location is the cytoplasm. ATPase which is responsible for recognizing, binding, unfolding and translocation of substrate proteins into the archaeal 20S proteasome core particle. Is essential for opening the gate of the 20S proteasome via an interaction with its C-terminus, thereby allowing substrate entry and access to the site of proteolysis. Thus, the C-termini of the proteasomal ATPase function like a 'key in a lock' to induce gate opening and therefore regulate proteolysis. Unfolding activity requires energy from ATP hydrolysis, whereas ATP binding alone promotes ATPase-20S proteasome association which triggers gate opening, and supports translocation of unfolded substrates. This Saccharolobus islandicus (strain M.16.27) (Sulfolobus islandicus) protein is Proteasome-activating nucleotidase.